Reading from the N-terminus, the 599-residue chain is Dehydrogenase eriK (599 aa).

Positions 1 to 20 (MAFLKARLAALLSVAVSCSA) are cleaved as a signal peptide. FAD is bound by residues 43–44 (TA) and 64–65 (EG). Asparagine 93 carries N-linked (GlcNAc...) asparagine glycosylation. 122–125 (NGMY) serves as a coordination point for FAD. Residues asparagine 169, asparagine 191, asparagine 234, asparagine 260, asparagine 284, asparagine 319, asparagine 339, asparagine 353, asparagine 365, asparagine 370, asparagine 398, asparagine 456, and asparagine 518 are each glycosylated (N-linked (GlcNAc...) asparagine). FAD is bound by residues alanine 569 and 580 to 581 (TQ).

Belongs to the GMC oxidoreductase family. In terms of assembly, homodimer. Requires FAD as cofactor.

Its function is as follows. Dehydrogenase; part of the gene cluster that mediates the biosynthesis of erinacines, cyathane-xylosides that show unique biological activities, including leishmanicidal activity, stimulating activity for nerve growth-factor synthesis, and agonistic activity toward the kappa opioid receptor. The role of the dehydrogenase eriK within the pathway has still to be determined. The first step of the erinacines biosynthesis pathway is catalyzed by the geranylgeranyl diphosphate (GGPP) synthase eriE via conversion of farnesyl pyrophosphate and isopentyl pyrophosphate into geranylgeranyl pyrophosphate (GGPP). GGPP is then substrate of the diterpene cyclase eriG for the production of cyatha-3,12-diene. The cytochrome P450 monooxygenase eriI then hydroxylates cyatha-3,12-diene at C-14 of the seven-membered ring to produce erinacol, which is further hydroxylated at C-15 by the cytochrome P450 monooxygenase eriC to yield cyathadiol. The cytochrome P450 monooxygenase eriA then catalyzes C-11 hydroxylation in the presence of the short chain dehydrogenase/reductase (SDR) eriH, which leads to the production of cyathatriol. The acetyltransferase eriL converts cyathatriol into 11-O-acetyl-cyathatriol. The SDR eriH catalyzes further oxidation of 11-O-acetyl-cyathatriol into 1-O-acetylcyathin A3. Finally, the glycosyl transferase eriJ tranfers xylose from UDP-xylose onto C-14 of 11-O-acetyl-cyathatriol to form eracine Q. EriJ is also able to convert 11-O-acetyl-cyathatriol to eracine Q2 by using UDP-D-glucose as cosubstrate, but at a lower rate. In Hericium erinaceus (Lion's mane mushroom), this protein is Dehydrogenase eriK.